Here is a 700-residue protein sequence, read N- to C-terminus: Elongation factor G 2 (700 aa).

One can recognise a tr-type G domain in the interval 8–290; sequence ERYRNIGISA…AVIDFLPSPV (283 aa). GTP-binding positions include 17-24, 88-92, and 142-145; these read AHIDAGKT, DTPGH, and NKMD.

The protein belongs to the TRAFAC class translation factor GTPase superfamily. Classic translation factor GTPase family. EF-G/EF-2 subfamily.

Its subcellular location is the cytoplasm. Its function is as follows. Catalyzes the GTP-dependent ribosomal translocation step during translation elongation. During this step, the ribosome changes from the pre-translocational (PRE) to the post-translocational (POST) state as the newly formed A-site-bound peptidyl-tRNA and P-site-bound deacylated tRNA move to the P and E sites, respectively. Catalyzes the coordinated movement of the two tRNA molecules, the mRNA and conformational changes in the ribosome. The sequence is that of Elongation factor G 2 from Burkholderia mallei (strain ATCC 23344).